The following is a 63-amino-acid chain: Putative flagellar calcium-binding protein (63 aa).

Positions 1–11 are enriched in polar residues; it reads MGCISSKSTQT. The segment at 1–23 is disordered; the sequence is MGCISSKSTQTGKKEGKTAAERK. The segment covering 12 to 23 has biased composition (basic and acidic residues); that stretch reads GKKEGKTAAERK. Residues 40–63 form the EF-hand domain; it reads EDKARRIELFKKFDKNNTGKLSME. 4 residues coordinate Ca(2+): Asp53, Asn55, Thr57, and Lys59.

This sequence belongs to the calflagin family.

It localises to the cell projection. Its subcellular location is the cilium. The protein resides in the flagellum. The protein is Putative flagellar calcium-binding protein (CABP) of Crithidia fasciculata.